The chain runs to 922 residues: Chaperone protein ClpC, chloroplastic (922 aa).

Residues 1–72 (MARVLAQSLS…RPGLDFHSKV (72 aa)) constitute a chloroplast transit peptide. A Clp R domain is found at 92–234 (FERFTEKAIK…RTQVIRMVGE (143 aa)). Repeat stretches follow at residues 95-160 (FTEK…IGRG) and 170-234 (FTPR…MVGE). The segment at 255–502 (LEEYGTNLTK…RVRLQHAQLP (248 aa)) is i. Residue 300-307 (GEPGVGKT) participates in ATP binding. The 36-residue stretch at 509 to 544 (DKEVRKIVKEKEEYVRNQDFEKAGELRDKEMDLKAQ) folds into the UVR domain. Positions 569 to 760 (VTEVDIQHIV…LLIMTSNVGS (192 aa)) are II. An ATP-binding site is contributed by 643–650 (GPTGVGKS).

This sequence belongs to the ClpA/ClpB family. ClpC subfamily.

It is found in the plastid. The protein localises to the chloroplast. In terms of biological role, molecular chaperone that may interact with a ClpP-like protease involved in degradation of denatured proteins in the chloroplast. The chain is Chaperone protein ClpC, chloroplastic from Pisum sativum (Garden pea).